A 490-amino-acid chain; its full sequence is Ribulose bisphosphate carboxylase large chain (490 aa).

Substrate contacts are provided by Asn-127 and Thr-177. The active-site Proton acceptor is Lys-179. Lys-181 lines the substrate pocket. Mg(2+) is bound by residues Lys-205, Asp-207, and Glu-208. The residue at position 205 (Lys-205) is an N6-carboxylysine. His-297 functions as the Proton acceptor in the catalytic mechanism. Substrate is bound by residues Arg-298, His-330, and Ser-382.

Belongs to the RuBisCO large chain family. Type I subfamily. In terms of assembly, heterohexadecamer of 8 large chains and 8 small chains. It depends on Mg(2+) as a cofactor.

It localises to the plastid. The protein resides in the chloroplast. It carries out the reaction 2 (2R)-3-phosphoglycerate + 2 H(+) = D-ribulose 1,5-bisphosphate + CO2 + H2O. It catalyses the reaction D-ribulose 1,5-bisphosphate + O2 = 2-phosphoglycolate + (2R)-3-phosphoglycerate + 2 H(+). RuBisCO catalyzes two reactions: the carboxylation of D-ribulose 1,5-bisphosphate, the primary event in carbon dioxide fixation, as well as the oxidative fragmentation of the pentose substrate in the photorespiration process. Both reactions occur simultaneously and in competition at the same active site. This is Ribulose bisphosphate carboxylase large chain from Cylindrotheca sp. (strain N1) (Marine diatom).